The primary structure comprises 367 residues: Alanine racemase (367 aa).

The active-site Proton acceptor; specific for D-alanine is the Lys-40. The residue at position 40 (Lys-40) is an N6-(pyridoxal phosphate)lysine. Residue Arg-136 participates in substrate binding. The active-site Proton acceptor; specific for L-alanine is the Tyr-263. Residue Met-310 coordinates substrate.

Belongs to the alanine racemase family. Pyridoxal 5'-phosphate serves as cofactor.

The enzyme catalyses L-alanine = D-alanine. It functions in the pathway amino-acid biosynthesis; D-alanine biosynthesis; D-alanine from L-alanine: step 1/1. Its function is as follows. Catalyzes the interconversion of L-alanine and D-alanine. May also act on other amino acids. The protein is Alanine racemase (alr) of Streptococcus thermophilus (strain ATCC BAA-491 / LMD-9).